Reading from the N-terminus, the 606-residue chain is Sodium-independent sulfate anion transporter (606 aa).

Topologically, residues M1–D51 are extracellular. The chain crosses the membrane as a helical span at residues F52–V72. A73 is a topological domain (cytoplasmic). A helical membrane pass occupies residues G74–L94. Residues G95–V100 are Extracellular-facing. The helical transmembrane segment at T101–F117 threads the bilayer. At H118–E119 the chain is on the cytoplasmic side. A helical transmembrane segment spans residues P120 to L140. The Extracellular portion of the chain corresponds to R141 to D147. A helical transmembrane segment spans residues F148 to G168. The Cytoplasmic portion of the chain corresponds to Q169–T197. The chain crosses the membrane as a helical span at residues R198 to M218. Residues R219 to L250 are Extracellular-facing. The helical transmembrane segment at V251–I271 threads the bilayer. The Cytoplasmic portion of the chain corresponds to L272 to G307. The helical transmembrane segment at A308 to F328 threads the bilayer. Over A329–E341 the chain is Extracellular. The chain crosses the membrane as a helical span at residues L342–G362. The Cytoplasmic portion of the chain corresponds to S363 to G374. The helical transmembrane segment at V375–L395 threads the bilayer. Topologically, residues T396–L398 are extracellular. A helical membrane pass occupies residues F399–F419. Residues D420–T441 are Cytoplasmic-facing. A helical membrane pass occupies residues F442–L462. Topologically, residues M463–A606 are extracellular. The 115-residue stretch at R470–P584 folds into the STAS domain.

Belongs to the SLC26A/SulP transporter (TC 2.A.53) family. Detected in all tissues tested with highest expression observed in brain, kidney, HEVEC and placenta and lowest in pancreas, skeletal muscle, liver, lung and heart.

The protein resides in the cell membrane. It is found in the lysosome membrane. The protein localises to the apical cell membrane. Its subcellular location is the basolateral cell membrane. The catalysed reaction is hydrogencarbonate(in) + chloride(out) = hydrogencarbonate(out) + chloride(in). It catalyses the reaction sulfate(in) + H(+)(in) = sulfate(out) + H(+)(out). It carries out the reaction oxalate(in) + chloride(out) = oxalate(out) + chloride(in). Its function is as follows. Sodium-independent anion exchanger mediating bicarbonate, chloride, sulfate and oxalate transport. Exhibits sodium-independent sulfate anion transporter activity that may cooperate with SLC26A2 to mediate DIDS-sensitive sulfate uptake into high endothelial venules endothelial cells (HEVEC). In the kidney, mediates chloride-bicarbonate exchange, facilitating V-ATPase-mediated acid secretion. May function as a chloride channel, playing an important role in moderating chloride homeostasis and neuronal activity in the cerebellum. The sequence is that of Sodium-independent sulfate anion transporter from Homo sapiens (Human).